We begin with the raw amino-acid sequence, 317 residues long: Nicotianamine synthase (317 aa).

It belongs to the nicotianamine synthase (NAS)-like family. As to quaternary structure, homomultimer. As to expression, leaves and roots.

The enzyme catalyses 3 S-adenosyl-L-methionine = nicotianamine + 3 S-methyl-5'-thioadenosine + 3 H(+). Functionally, synthesizes nicotianamine, a polyamine that serves as a sensor for the physiological iron status within the plant, and/or might be involved in the transport of iron. This chain is Nicotianamine synthase (CHLN), found in Solanum lycopersicum (Tomato).